A 238-amino-acid chain; its full sequence is MSEVTTAEFNEEGKYLRKIRSFVLREGRLTKGQAQAIETQWPTMGLDYSPAPLDLADVFGRKADTVLEIGFGMGASLVQMAQEAPELNFIGIEVHKPGVGSCLSDAAAAGVTNLRVYHHDAMEVLEHAIADGSLTRVQLFFPDPWHKKRHHKRRIVQAEFAELIRRKLKIGGVFHMATDWENYSEHMLEVMNVASGYKNQSADGTVVPRPDHRPLTKFEARGHRLGHGVWDLMFERIA.

E68, E93, D120, and D143 together coordinate S-adenosyl-L-methionine. Residue D143 is part of the active site. Substrate contacts are provided by residues K147, D179, and 216–219 (TKFE).

It belongs to the class I-like SAM-binding methyltransferase superfamily. TrmB family.

The catalysed reaction is guanosine(46) in tRNA + S-adenosyl-L-methionine = N(7)-methylguanosine(46) in tRNA + S-adenosyl-L-homocysteine. It participates in tRNA modification; N(7)-methylguanine-tRNA biosynthesis. In terms of biological role, catalyzes the formation of N(7)-methylguanine at position 46 (m7G46) in tRNA. This chain is tRNA (guanine-N(7)-)-methyltransferase, found in Shewanella oneidensis (strain ATCC 700550 / JCM 31522 / CIP 106686 / LMG 19005 / NCIMB 14063 / MR-1).